A 744-amino-acid chain; its full sequence is 6-phosphofructo-2-kinase/fructose-2,6-bisphosphatase (744 aa).

Disordered regions lie at residues 1-23 (MGSG…GGQL) and 213-245 (RSLS…DGSP). A lipid anchor (N-myristoyl glycine) is attached at Gly-2. In terms of domain architecture, CBM20 spans 17-122 (NGGGGQLYVS…GDARLALFRL (106 aa)). Residues 213 to 232 (RSLSASGSFRNDSTPKAAQR) show a composition bias toward polar residues. Ser-220 is subject to Phosphoserine; by CPK3. Ser-276 and Ser-295 each carry phosphoserine. Positions 301–549 (SLSASSFLID…VFFLVNTHLT (249 aa)) are 6-phosphofructo-2-kinase. A Phosphoserine; by CPK3 modification is found at Ser-303. ATP is bound at residue 349–357 (GLPARGKTF). Residues Arg-382 and Arg-406 each coordinate beta-D-fructose 6-phosphate. Asp-431 is a catalytic residue. Beta-D-fructose 6-phosphate contacts are provided by Thr-433 and Arg-439. Residue Cys-460 is part of the active site. Residue 469-474 (NIRLKI) coordinates ATP. Beta-D-fructose 6-phosphate-binding residues include Arg-496 and Tyr-500. A fructose-2,6-bisphosphatase region spans residues 550-744 (PRPILLTRHG…VQEKRYKLMD (195 aa)). Beta-D-fructose 2,6-bisphosphate is bound at residue Arg-557. His-558 serves as the catalytic Tele-phosphohistidine intermediate. The beta-D-fructose 2,6-bisphosphate site is built by Asn-564 and Gly-570. Residue Glu-630 is the Proton donor/acceptor of the active site. Residues Tyr-641, Arg-655, Lys-659, Tyr-670, Gln-697, and Arg-701 each contribute to the beta-D-fructose 2,6-bisphosphate site. 652-655 (YESR) provides a ligand contact to ATP. 697 to 701 (QAVLR) is an ATP binding site.

This sequence in the C-terminal section; belongs to the phosphoglycerate mutase family. In terms of assembly, interacts with 14-3-3 proteins; these interactions may regulate both nitrate assimilation and sucrose/starch partitioning in leaves during the diurnal cycle. Post-translationally, phosphorylation at Ser-220 and Ser-303 by CPK3 promotes 14-3-3 proteins binding.

It localises to the membrane. It is found in the cytoplasm. The enzyme catalyses beta-D-fructose 2,6-bisphosphate + H2O = beta-D-fructose 6-phosphate + phosphate. It catalyses the reaction beta-D-fructose 6-phosphate + ATP = beta-D-fructose 2,6-bisphosphate + ADP + H(+). 6-phosphofructo-2-kinase activity is activated by pyruvate. 6-phosphofructo-2-kinase activity is inhibited by PPi, phosphoenolpyruvate and 2-phosphoglycerate. Fructose-2,6-bisphosphatase activity is inhibited by pyruvate, fructose 1,6-bisphosphate and 6-phosphogluconate. In terms of biological role, synthesis and degradation of fructose 2,6-bisphosphate. Regulates carbon partitioning between sucrose versus starch during the diurnal cycle. The polypeptide is 6-phosphofructo-2-kinase/fructose-2,6-bisphosphatase (FKFBP) (Arabidopsis thaliana (Mouse-ear cress)).